Here is a 104-residue protein sequence, read N- to C-terminus: Large ribosomal subunit protein uL24 (104 aa).

This sequence belongs to the universal ribosomal protein uL24 family. Part of the 50S ribosomal subunit.

In terms of biological role, one of two assembly initiator proteins, it binds directly to the 5'-end of the 23S rRNA, where it nucleates assembly of the 50S subunit. One of the proteins that surrounds the polypeptide exit tunnel on the outside of the subunit. In Proteus mirabilis (strain HI4320), this protein is Large ribosomal subunit protein uL24.